We begin with the raw amino-acid sequence, 531 residues long: Importin subunit alpha-3 (531 aa).

Residues 1–58 (MSLRPSAKTEVRRNRYKVAVDAEEGRRRREDNLVEIRKNKREENLQKKRFTSSMAFGS) form the IBB domain. 8 ARM repeats span residues 111 to 153 (INEV…TSEN), 154 to 198 (TNVI…CRDL), 199 to 236 (VLSY…RGKP), 237 to 281 (PPAF…DKIQ), 282 to 321 (AVIE…DDLQ), 322 to 364 (TQMV…NADQ), 365 to 405 (IQAV…GGTH), and 406 to 447 (DQIK…VVGE). A disordered region spans residues 500–524 (DNEEEGNDENHAPQSGFQFGSTNVP). Positions 511-524 (APQSGFQFGSTNVP) are enriched in polar residues.

The protein belongs to the importin alpha family. As to quaternary structure, forms a complex with importin subunit beta-1. Interacts with PRL1. Interacts with A.tumefaciens VirD2 and VirE2.

The protein localises to the nucleus. Binds to conventional NLS motifs and mediates nuclear protein import across the nuclear envelope. Acts as a cellular receptor for the nuclear import of the virD2 protein of Agrobacterium, but is not essential for Agrobacterium-mediated root transformation. May be involved in the regulation of pathogen-induced salicylic acid accumulation. The chain is Importin subunit alpha-3 from Arabidopsis thaliana (Mouse-ear cress).